The chain runs to 221 residues: MASIDEGSRVERRFCAVGNHTLRKPYRQLNNKYLVRFACLLNSEIRAGNLICCKCYTDLVRLYRKKNDNAKRHKMARETAASITDVSGSQSSSHQSAPSLHVSGQSSEFGASYSEGGIVTPDEELCSHRSLSQDSDNVPTTSAAAIQKRQLARANLMVKPSQRLSLAQTTPDCDDYDPNSNLSLNAVNGTRLPHIQPIPKRRPTVLDKQSMDIYLMGTTGG.

The segment at 69–113 is disordered; that stretch reads NAKRHKMARETAASITDVSGSQSSSHQSAPSLHVSGQSSEFGASY. Residues 86 to 103 are compositionally biased toward low complexity; that stretch reads VSGSQSSSHQSAPSLHVS.

As to quaternary structure, component of the HipHop-HOAP telomere-capping complex, composed of at least HipHop and cav/HOAP, and may include Su(var)205/HP1; HipHop and cav/HOAP, but not Su(var)205, are interdependent for their protein stability. Interacts (via N-terminus) with cav/HOAP and Su(var)205/HP1. The HipHop-HOAP complex recruits the MTV complex, consisting of moi/modigliani, tea and ver/verrocchio, to telomeres to form the terminin telomere-capping complex.

It is found in the nucleus. The protein resides in the chromosome. The protein localises to the telomere. Part of the HipHop-HOAP complex that recruits the MTV complex to form the terminin telomere-capping complex, which binds to chromosome ends in a sequence-independent manner and prevents telomere fusion. In Drosophila melanogaster (Fruit fly), this protein is HP1-HOAP-interacting protein.